Here is a 175-residue protein sequence, read N- to C-terminus: Apoptosis regulator Bcl-2 homolog (175 aa).

A helical membrane pass occupies residues 152 to 174; sequence YYVTRYFRVAAFIITSLAVINLF.

Interacts with host BAK1 and BAX as well as other BH3-containing proteins including BIM, BID or PUMA.

It is found in the host membrane. Functionally, plays a role in the inhibition of host apoptosis. Interacts with host proapoptotic factors BAK1 and BAX to supposedly prevent their activation. This Canarypox virus (CNPV) protein is Apoptosis regulator Bcl-2 homolog (CNPV058).